Here is a 162-residue protein sequence, read N- to C-terminus: Peroxiredoxin-2 (162 aa).

One can recognise a Thioredoxin domain in the interval 4–162 (IAVGDVLPDG…SSADDILKDL (159 aa)). Cys-51 serves as the catalytic Cysteine sulfenic acid (-SOH) intermediate.

The protein belongs to the peroxiredoxin family. Prx5 subfamily. Monomer. Homodimer. Glutathionylation of C(P) causes the dimer to dissociate. Subsequent reduction of the mixed disulfide bond leads again to dimerization.

The enzyme catalyses [glutaredoxin]-dithiol + a hydroperoxide = [glutaredoxin]-disulfide + an alcohol + H2O. In terms of biological role, thiol-specific peroxidase that catalyzes the reduction of hydrogen peroxide and organic hydroperoxides to water and alcohols, respectively. Can reduce H(2)O(2) and short chain organic, fatty acid, and phospholipid hydroperoxides. Plays a role in cell protection against oxidative stress by detoxifying peroxides. This Populus trichocarpa (Western balsam poplar) protein is Peroxiredoxin-2.